A 132-amino-acid polypeptide reads, in one-letter code: uncharacterized protein (132 aa).

A disordered region spans residues 107–132 (LNTFSGSGQKHSQPGSGQHPFSFRKD). Polar residues predominate over residues 108–122 (NTFSGSGQKHSQPGS).

This is an uncharacterized protein from Bacillus subtilis (strain 168).